Consider the following 122-residue polypeptide: Large ribosomal subunit protein bL20c (122 aa).

It belongs to the bacterial ribosomal protein bL20 family.

The protein resides in the plastid. It localises to the chloroplast. Binds directly to 23S ribosomal RNA and is necessary for the in vitro assembly process of the 50S ribosomal subunit. It is not involved in the protein synthesizing functions of that subunit. The protein is Large ribosomal subunit protein bL20c of Dioscorea elephantipes (Elephant's foot yam).